The following is a 136-amino-acid chain: Nucleoside diphosphate kinase (136 aa).

Positions 10, 58, 86, 92, 104, and 114 each coordinate ATP. Histidine 117 functions as the Pros-phosphohistidine intermediate in the catalytic mechanism.

This sequence belongs to the NDK family. As to quaternary structure, homotetramer. The cofactor is Mg(2+).

Its subcellular location is the cytoplasm. The enzyme catalyses a 2'-deoxyribonucleoside 5'-diphosphate + ATP = a 2'-deoxyribonucleoside 5'-triphosphate + ADP. It carries out the reaction a ribonucleoside 5'-diphosphate + ATP = a ribonucleoside 5'-triphosphate + ADP. Functionally, major role in the synthesis of nucleoside triphosphates other than ATP. The ATP gamma phosphate is transferred to the NDP beta phosphate via a ping-pong mechanism, using a phosphorylated active-site intermediate. In Mycolicibacterium vanbaalenii (strain DSM 7251 / JCM 13017 / BCRC 16820 / KCTC 9966 / NRRL B-24157 / PYR-1) (Mycobacterium vanbaalenii), this protein is Nucleoside diphosphate kinase.